Reading from the N-terminus, the 77-residue chain is Ubiquitin-like protein NEDD8 (77 aa).

The interaction with uba-3 stretch occupies residues 70–72; that stretch reads VLA. Gly-76 is covalently cross-linked (Glycyl lysine isopeptide (Gly-Lys) (interchain with K-? in acceptor proteins)). Residue Phe-77 is a propeptide.

The protein belongs to the ubiquitin family. Interacts with dcn-1. Covalently attached to cullins. May interact with atx-3. Post-translationally, cleavage of precursor form is necessary for function.

It localises to the nucleus. The protein localises to the cytoplasm. In terms of biological role, ubiquitin-like protein which plays an important role in cell cycle control and embryogenesis. Covalent attachment to its substrates requires prior activation by the E1 complex uba-3-ula-1 and linkage to the E2 enzyme ubc-12. Attachment of ned-8 to cullins activates their associated E3 ubiquitin ligase activity, and thus promotes polyubiquitination and proteasomal degradation of cyclins and other regulatory proteins. In Caenorhabditis elegans, this protein is Ubiquitin-like protein NEDD8 (ned-8).